Consider the following 428-residue polypeptide: Enolase (428 aa).

Gln-163 contributes to the (2R)-2-phosphoglycerate binding site. Catalysis depends on Glu-205, which acts as the Proton donor. Mg(2+)-binding residues include Asp-242, Glu-286, and Asp-313. (2R)-2-phosphoglycerate-binding residues include Lys-338, Arg-367, Ser-368, and Lys-389. Lys-338 (proton acceptor) is an active-site residue.

Belongs to the enolase family. Mg(2+) is required as a cofactor.

It localises to the cytoplasm. The protein resides in the secreted. The protein localises to the cell surface. It catalyses the reaction (2R)-2-phosphoglycerate = phosphoenolpyruvate + H2O. It functions in the pathway carbohydrate degradation; glycolysis; pyruvate from D-glyceraldehyde 3-phosphate: step 4/5. Catalyzes the reversible conversion of 2-phosphoglycerate (2-PG) into phosphoenolpyruvate (PEP). It is essential for the degradation of carbohydrates via glycolysis. The chain is Enolase from Lactobacillus helveticus (strain DPC 4571).